Here is a 137-residue protein sequence, read N- to C-terminus: Small ribosomal subunit protein uS11 (137 aa).

2 disordered regions span residues 1–32 and 118–137; these read MPPK…AHIK and ISDV…RRRV. Residues 12 to 21 show a composition bias toward basic residues; it reads KTQKSRRRDK.

This sequence belongs to the universal ribosomal protein uS11 family. As to quaternary structure, part of the 30S ribosomal subunit. Interacts with proteins S7 and S18. Binds to IF-3.

In terms of biological role, located on the platform of the 30S subunit, it bridges several disparate RNA helices of the 16S rRNA. Forms part of the Shine-Dalgarno cleft in the 70S ribosome. This Nocardia farcinica (strain IFM 10152) protein is Small ribosomal subunit protein uS11.